Here is a 175-residue protein sequence, read N- to C-terminus: Adenine phosphoribosyltransferase (175 aa).

It belongs to the purine/pyrimidine phosphoribosyltransferase family. In terms of assembly, homodimer.

Its subcellular location is the cytoplasm. The catalysed reaction is AMP + diphosphate = 5-phospho-alpha-D-ribose 1-diphosphate + adenine. The protein operates within purine metabolism; AMP biosynthesis via salvage pathway; AMP from adenine: step 1/1. Its function is as follows. Catalyzes a salvage reaction resulting in the formation of AMP, that is energically less costly than de novo synthesis. This chain is Adenine phosphoribosyltransferase, found in Lactobacillus delbrueckii subsp. bulgaricus (strain ATCC 11842 / DSM 20081 / BCRC 10696 / JCM 1002 / NBRC 13953 / NCIMB 11778 / NCTC 12712 / WDCM 00102 / Lb 14).